Here is a 380-residue protein sequence, read N- to C-terminus: Ceramide synthase 2 (380 aa).

Residues 1–40 (MLQTLHDYFWWERLWLPVNLTWADLEDRDGRVYAKASDLY) are Lumenal-facing. N-linked (GlcNAc...) asparagine glycosylation is present at Asn19. A helical membrane pass occupies residues 41 to 61 (ITLPLALLFLIIRYFFELYVA). Residues 67–128 (LLNVKEKTRL…RRRRNQDRPS (62 aa)) are homeobox-like. Positions 131 to 332 (KKFREASWRF…ILRMAHKFIT (202 aa)) constitute a TLC domain. 4 consecutive transmembrane segments (helical) span residues 140–160 (FTFY…KPWF), 181–201 (WYYM…ASDV), 209–229 (QIIH…ANYV), and 264–284 (IFIV…PFWI). The Last loop motif motif lies at 291 to 300 (YPLELYPAFF). A helical transmembrane segment spans residues 304-324 (FFNFMMGVLQLLHIFWAYLIL). Residues 325-380 (RMAHKFITGKVVEDERSDREETESSEGEEAAAGGGAKNRPLANGHPILNNNHRKND) lie on the Cytoplasmic side of the membrane. A disordered region spans residues 338-380 (DERSDREETESSEGEEAAAGGGAKNRPLANGHPILNNNHRKND). Position 341 is a phosphoserine (Ser341). Residues 344-353 (EETESSEGEE) show a composition bias toward acidic residues. Residue Thr346 is modified to Phosphothreonine. 2 positions are modified to phosphoserine: Ser348 and Ser349.

Interacts with ATP6V0C, ASGR1, ASGR2 and SLC22A1/OCT1. Interacts with ELOV1, HSD17B12 and TECR. Interacts with NDUFS2. Acetylated. Deacetylation by SIRT3 increases enzyme activity and promotes mitochondrial ceramide accumulation. Post-translationally, phosphorylated at the C-terminus by CK2, leading to increase the ceramide synthase activity.

It localises to the endoplasmic reticulum membrane. The catalysed reaction is a very long-chain fatty acyl-CoA + a sphingoid base = an N-(very-long-chain fatty acyl)-sphingoid base + CoA + H(+). It catalyses the reaction docosanoyl-CoA + sphinganine = N-docosanoylsphinganine + CoA + H(+). The enzyme catalyses tetracosanoyl-CoA + sphinganine = N-tetracosanoylsphinganine + CoA + H(+). It carries out the reaction hexacosanoyl-CoA + sphinganine = N-hexacosanoylsphinganine + CoA + H(+). The catalysed reaction is (15Z)-tetracosenoyl-CoA + sphinganine = N-(15Z-tetracosenoyl)-sphinganine + CoA + H(+). It catalyses the reaction 2-hydroxytetracosanoyl-CoA + sphinganine = N-(2-hydroxytetracosanoyl)-sphinganine + CoA + H(+). The enzyme catalyses 2-hydroxydocosanoyl-CoA + sphinganine = N-(2-hydroxydocosanoyl)-sphinganine + CoA + H(+). It carries out the reaction 2-hydroxytetracosenoyl-CoA + sphinganine = N-(2-hydroxytetracosenoyl)-sphinganine + CoA + H(+). The catalysed reaction is tetracosenoyl-CoA + sphinganine = an N-tetracosenoylsphinganine + CoA + H(+). It catalyses the reaction hexacosenoyl-CoA + sphinganine = N-hexacosenoylsphinganine + CoA + H(+). The enzyme catalyses tetracosanoyl-CoA + sphing-4-enine = N-tetracosanoyl-sphing-4-enine + CoA + H(+). It carries out the reaction tetracosenoyl-CoA + sphing-4-enine = N-(tetracosenoyl)-sphing-4-enine + CoA + H(+). The catalysed reaction is heptadecasphing-4-enine + tetracosanoyl-CoA = N-tetracosanoyl-heptadecasphing-4-enine + CoA + H(+). It catalyses the reaction a fatty acyl-CoA + sphing-4-enine = an N-acylsphing-4-enine + CoA + H(+). The enzyme catalyses sphing-4-enine + hexadecanoyl-CoA = N-hexadecanoylsphing-4-enine + CoA + H(+). It carries out the reaction sphing-4-enine + octadecanoyl-CoA = N-octadecanoylsphing-4-enine + CoA + H(+). The catalysed reaction is eicosanoyl-CoA + sphing-4-enine = N-eicosanoyl-sphing-4-enine + CoA + H(+). It catalyses the reaction sphinganine + hexadecanoyl-CoA = N-hexadecanoylsphinganine + CoA + H(+). The enzyme catalyses sphinganine + octadecanoyl-CoA = N-(octadecanoyl)-sphinganine + CoA + H(+). It carries out the reaction sphinganine + (9Z)-octadecenoyl-CoA = N-(9Z-octadecenoyl)-sphinganine + CoA + H(+). The catalysed reaction is eicosanoyl-CoA + sphinganine = N-eicosanoylsphinganine + CoA + H(+). Its pathway is lipid metabolism; sphingolipid metabolism. Its activity is regulated as follows. Ceramide synthase activity is inhibited by sphingosine-1-phosphate. Its function is as follows. Ceramide synthase that catalyzes the transfer of the acyl chain from acyl-CoA to a sphingoid base, with high selectivity toward very-long-chain fatty acyl-CoA (chain length C22-C27). N-acylates sphinganine and sphingosine bases to form dihydroceramides and ceramides in de novo synthesis and salvage pathways, respectively. Plays a non-redundant role in the synthesis of ceramides with very-long-chain fatty acids in kidney, liver and brain. Regulates the abundance of myelin-specific sphingolipids galactosylceramide and sulfatide that affects myelin sheath architecture and motor neuron functions. In Bos taurus (Bovine), this protein is Ceramide synthase 2.